The primary structure comprises 195 residues: Small ribosomal subunit protein uS4 (195 aa).

Residues 92-152 (SRLDNIVYRL…EKHKHKANKN (61 aa)) form the S4 RNA-binding domain.

It belongs to the universal ribosomal protein uS4 family. As to quaternary structure, part of the 30S ribosomal subunit. Contacts protein S5. The interaction surface between S4 and S5 is involved in control of translational fidelity.

Functionally, one of the primary rRNA binding proteins, it binds directly to 16S rRNA where it nucleates assembly of the body of the 30S subunit. Its function is as follows. With S5 and S12 plays an important role in translational accuracy. The polypeptide is Small ribosomal subunit protein uS4 (Karelsulcia muelleri (strain GWSS) (Sulcia muelleri)).